Consider the following 329-residue polypeptide: ADP-L-glycero-D-manno-heptose-6-epimerase (329 aa).

Residues 10–11, 31–32, lysine 38, lysine 53, 74–78, and asparagine 91 each bind NADP(+); these read FI, DD, and QGACS. The active-site Proton acceptor is tyrosine 138. Lysine 142 is a binding site for NADP(+). Asparagine 167 provides a ligand contact to substrate. Positions 168 and 176 each coordinate NADP(+). Residue lysine 176 is the Proton acceptor of the active site. Residues arginine 178, histidine 185, 199 to 202, arginine 212, and tyrosine 291 each bind substrate; that span reads FAGW.

Belongs to the NAD(P)-dependent epimerase/dehydratase family. HldD subfamily. As to quaternary structure, homopentamer. The cofactor is NADP(+).

It catalyses the reaction ADP-D-glycero-beta-D-manno-heptose = ADP-L-glycero-beta-D-manno-heptose. It functions in the pathway nucleotide-sugar biosynthesis; ADP-L-glycero-beta-D-manno-heptose biosynthesis; ADP-L-glycero-beta-D-manno-heptose from D-glycero-beta-D-manno-heptose 7-phosphate: step 4/4. The protein operates within bacterial outer membrane biogenesis; LPS core biosynthesis. Its function is as follows. Catalyzes the interconversion between ADP-D-glycero-beta-D-manno-heptose and ADP-L-glycero-beta-D-manno-heptose via an epimerization at carbon 6 of the heptose. This Bordetella parapertussis (strain 12822 / ATCC BAA-587 / NCTC 13253) protein is ADP-L-glycero-D-manno-heptose-6-epimerase.